A 231-amino-acid polypeptide reads, in one-letter code: Ribosomal RNA small subunit methyltransferase G (231 aa).

S-adenosyl-L-methionine is bound by residues Gly75, Phe80, 126 to 127, and Arg142; that span reads AE.

The protein belongs to the methyltransferase superfamily. RNA methyltransferase RsmG family.

It localises to the cytoplasm. In terms of biological role, specifically methylates the N7 position of a guanine in 16S rRNA. The polypeptide is Ribosomal RNA small subunit methyltransferase G (Mycoplasma capricolum subsp. capricolum (strain California kid / ATCC 27343 / NCTC 10154)).